A 152-amino-acid chain; its full sequence is Arginine repressor (152 aa).

It belongs to the ArgR family.

The protein resides in the cytoplasm. It functions in the pathway amino-acid biosynthesis; L-arginine biosynthesis [regulation]. Functionally, regulates arginine biosynthesis genes. This Lactococcus lactis subsp. lactis (strain IL1403) (Streptococcus lactis) protein is Arginine repressor.